Consider the following 199-residue polypeptide: Pyridoxine/pyridoxamine 5'-phosphate oxidase (199 aa).

FMN contacts are provided by residues 44-49 (RTVLLK), 59-60 (YS), Lys66, and Gln91. Residue Lys49 coordinates substrate. Tyr109, Arg113, and Ser117 together coordinate substrate. Residues 126-127 (QS) and Trp171 contribute to the FMN site. 177–179 (RLH) contacts substrate. Arg181 contacts FMN.

This sequence belongs to the pyridoxamine 5'-phosphate oxidase family. In terms of assembly, homodimer. It depends on FMN as a cofactor.

The catalysed reaction is pyridoxamine 5'-phosphate + O2 + H2O = pyridoxal 5'-phosphate + H2O2 + NH4(+). It catalyses the reaction pyridoxine 5'-phosphate + O2 = pyridoxal 5'-phosphate + H2O2. It functions in the pathway cofactor metabolism; pyridoxal 5'-phosphate salvage; pyridoxal 5'-phosphate from pyridoxamine 5'-phosphate: step 1/1. The protein operates within cofactor metabolism; pyridoxal 5'-phosphate salvage; pyridoxal 5'-phosphate from pyridoxine 5'-phosphate: step 1/1. In terms of biological role, catalyzes the oxidation of either pyridoxine 5'-phosphate (PNP) or pyridoxamine 5'-phosphate (PMP) into pyridoxal 5'-phosphate (PLP). In Xanthomonas oryzae pv. oryzae (strain KACC10331 / KXO85), this protein is Pyridoxine/pyridoxamine 5'-phosphate oxidase.